We begin with the raw amino-acid sequence, 246 residues long: tRNA (guanine-N(1)-)-methyltransferase (246 aa).

S-adenosyl-L-methionine is bound by residues Gly113 and Ile133 to Leu138.

This sequence belongs to the RNA methyltransferase TrmD family. As to quaternary structure, homodimer.

Its subcellular location is the cytoplasm. It catalyses the reaction guanosine(37) in tRNA + S-adenosyl-L-methionine = N(1)-methylguanosine(37) in tRNA + S-adenosyl-L-homocysteine + H(+). Its function is as follows. Specifically methylates guanosine-37 in various tRNAs. The sequence is that of tRNA (guanine-N(1)-)-methyltransferase (trmD) from Halalkalibacterium halodurans (strain ATCC BAA-125 / DSM 18197 / FERM 7344 / JCM 9153 / C-125) (Bacillus halodurans).